The chain runs to 146 residues: uncharacterized protein (146 aa).

Acidic residues predominate over residues 86–96 (EFDSPMDEEEE). A disordered region spans residues 86-124 (EFDSPMDEEEETKPREASLDQTAPKKSKKEELLVKNNNF).

This is an uncharacterized protein from Ostreid herpesvirus 1 (isolate France) (OsHV-1).